We begin with the raw amino-acid sequence, 144 residues long: Grifin (144 aa).

One can recognise a Galectin domain in the interval 5–133 (FEAFCAGGLA…EHRLAQVELA (129 aa)). A Phosphoserine modification is found at serine 138.

As to quaternary structure, homodimer.

This Mus musculus (Mouse) protein is Grifin (Grifin).